Here is a 487-residue protein sequence, read N- to C-terminus: Cyclic AMP-dependent transcription factor ATF-2 (487 aa).

The C2H2-type zinc finger occupies 7 to 31 (FLCTAPGCGQRFTNEDHLAVHKHKH). 2 disordered regions span residues 106-132 (EEPS…DEKE) and 267-354 (QHPQ…CRQK). The segment covering 298 to 319 (QQPATSTTETPASPAQPTQQTP) has biased composition (low complexity). Positions 328-345 (AANEDPDEKRRKFLERNR) are enriched in basic and acidic residues. Residues 334–397 (DEKRRKFLER…AQLKQLLLAH (64 aa)) enclose the bZIP domain. Residues 336-356 (KRRKFLERNRAAASRCRQKRK) form a basic motif region. The interval 362-390 (LEKKAEDLSSLNGQLQNEVTLLRNEVAQL) is leucine-zipper. The Nuclear export signal motif lies at 387-396 (VAQLKQLLLA). A disordered region spans residues 407–487 (KKSGYHTADK…PPSQAQPSGS (81 aa)). Polar residues predominate over residues 425–436 (VPSSPHTEAIQH). The segment covering 437 to 449 (SSVSTSNGVSSTS) has biased composition (low complexity). The span at 457 to 468 (SVLTQLADQSSE) shows a compositional bias: polar residues.

It belongs to the bZIP family. ATF subfamily. Binds DNA as a dimer and can form a homodimer in the absence of DNA. Can form a heterodimer with JUN. Heterodimerization is essential for its transcriptional activity.

It localises to the nucleus. It is found in the cytoplasm. Its subcellular location is the mitochondrion outer membrane. Transcriptional activator which regulates the transcription of various genes, including those involved in anti-apoptosis, cell growth, and DNA damage response. Dependent on its binding partner, binds to CRE (cAMP response element) consensus sequences (5'-TGACGTCA-3') or to AP-1 (activator protein 1) consensus sequences (5'-TGACTCA-3'). The polypeptide is Cyclic AMP-dependent transcription factor ATF-2 (ATF2) (Gallus gallus (Chicken)).